A 507-amino-acid chain; its full sequence is Maturase K (507 aa).

The protein belongs to the intron maturase 2 family. MatK subfamily.

It localises to the plastid. Its subcellular location is the chloroplast. Usually encoded in the trnK tRNA gene intron. Probably assists in splicing its own and other chloroplast group II introns. This chain is Maturase K, found in Lyonia ferruginea (Rusty staggerbush).